Consider the following 474-residue polypeptide: Calcium/calmodulin-dependent protein kinase type IV (474 aa).

Ser11 and Ser12 each carry phosphoserine; by autocatalysis. The Protein kinase domain occupies 42–296; sequence FEVESELGRG…TFQALQHPWV (255 aa). ATP contacts are provided by residues 48–56 and Lys71; that span reads LGRGATSIV. O-linked (GlcNAc) threonine glycosylation is present at Thr53. A glycan (O-linked (GlcNAc) serine) is linked at Ser54. A glycan (O-linked (GlcNAc) serine) is linked at Ser133. The active-site Proton acceptor is Asp160. Ser185 is a glycosylation site (O-linked (GlcNAc) serine). A Phosphothreonine; by CaMKK1 and CaMKK2 modification is found at Thr196. The interval 297–336 is autoinhibitory domain; the sequence is TGKAANFVHMDTAQKKLQEFNARRKLKAAVKAVVASSRLG. A PP2A-binding region spans residues 302–319; that stretch reads NFVHMDTAQKKLQEFNAR. The segment at 318 to 337 is calmodulin-binding; it reads ARRKLKAAVKAVVASSRLGS. Ser332 carries the phosphoserine; by autocatalysis modification. Positions 336–474 are disordered; it reads GSASSSHTNI…PQQDAILPEY (139 aa). Ser337 carries the post-translational modification Phosphoserine. Ser340, Ser341, and Ser352 each carry an O-linked (GlcNAc) serine glycan. Over residues 342-356 the composition is skewed to polar residues; it reads HTNIQESNKASSEAQ. Over residues 360-392 the composition is skewed to basic and acidic residues; that stretch reads DGKDKTDPLENKMQAGDHEAAKAAADETMKLQS. A compositionally biased stretch (acidic residues) spans 393-413; sequence EEVEEEEGVKEEEEEEEEEEE. The span at 431–454 shows a compositional bias: basic and acidic residues; sequence QEMKRNSEETLKSVEEEMDPKAEE. Ser437 and Ser443 each carry phosphoserine.

It belongs to the protein kinase superfamily. CAMK Ser/Thr protein kinase family. CaMK subfamily. In terms of assembly, monomer. Interacts with protein phosphatase 2A (PPP2CA/PPP2CB); the interaction is mutually exclusive with binding to Ca(2+)/calmodulin. Post-translationally, phosphorylated by CaMKK1 and CaMKK2 on Thr-196. Dephosphorylated by protein phosphatase 2A. Autophosphorylated on Ser-11 and Ser-12. Glycosylation at Ser-185 modulates the phosphorylation of CaMK4 at Thr-196 and negatively regulates its activity toward CREB1 in basal conditions and during early inomycin stimulation. In terms of processing, the N-terminus of calspermin is blocked. As to expression, isoform 1 is expressed in brain and isoform 2 is testis specific.

It localises to the cytoplasm. The protein localises to the nucleus. It carries out the reaction L-seryl-[protein] + ATP = O-phospho-L-seryl-[protein] + ADP + H(+). The enzyme catalyses L-threonyl-[protein] + ATP = O-phospho-L-threonyl-[protein] + ADP + H(+). Its activity is regulated as follows. Activated by Ca(2+)/calmodulin. Binding of calmodulin results in conformational change that relieves intrasteric autoinhibition and allows phosphorylation of Thr-196 within the activation loop by CaMKK1 or CaMKK2. Phosphorylation of Thr-196 results in a 10-20-fold increase in total activity to generate Ca(2+)/calmodulin-independent activity. Autophosphorylation of the N-terminus Ser-11 and Ser-12 is required for full activation. Inactivated by protein phosphatase 2A (PPP2CA/PPP2CB) which dephosphorylates Thr-196, thereby terminating autonomous activity and helping to maintain the enzyme in its autoinhibited state. Its function is as follows. Calcium/calmodulin-dependent protein kinase that operates in the calcium-triggered CaMKK-CaMK4 signaling cascade and regulates, mainly by phosphorylation, the activity of several transcription activators, such as CREB1, MEF2D, JUN and RORA, which play pivotal roles in immune response, inflammation, and memory consolidation. In the thymus, regulates the CD4(+)/CD8(+) double positive thymocytes selection threshold during T-cell ontogeny. In CD4 memory T-cells, is required to link T-cell antigen receptor (TCR) signaling to the production of IL2, IFNG and IL4 (through the regulation of CREB and MEF2). Regulates the differentiation and survival phases of osteoclasts and dendritic cells (DCs). Mediates DCs survival by linking TLR4 and the regulation of temporal expression of BCL2. Phosphorylates the transcription activator CREB1 on 'Ser-133' in hippocampal neuron nuclei and contribute to memory consolidation and long term potentiation (LTP) in the hippocampus. Can activate the MAP kinases MAPK1/ERK2, MAPK8/JNK1 and MAPK14/p38 and stimulate transcription through the phosphorylation of ELK1 and ATF2. Can also phosphorylate in vitro CREBBP, PRM2, MEF2A and STMN1/OP18. In terms of biological role, heat-stable, acidic, calmodulin-binding protein. The sequence is that of Calcium/calmodulin-dependent protein kinase type IV (Camk4) from Rattus norvegicus (Rat).